A 260-amino-acid polypeptide reads, in one-letter code: Ava biosynthesis cluster protein M (260 aa).

The signal sequence occupies residues 1–15; it reads MKVLVLGLCRTGTSS.

The protein belongs to the cytochrome P450 family.

It participates in secondary metabolite biosynthesis. Its function is as follows. Part of the cluster that mediates the biosynthesis of a highly modified cyclo-arginine-tryptophan dipeptide (cRW). The first step of the pathway is perfornmed by the arginine-containing cyclodipeptide synthase (RCPDS) avaA that acts as the scaffold-generating enzyme and is responsible for formation of the cyclo-Arg-Trp (cRW) diketopiperazine. AvaB then acts as a multifunctional flavoenzyme that is responsible for generating the cyclo-Arg-formylkynurenine DKP, which can be deformylated by avaC. AvaB then further catalyzes an additional N-oxidation followed by cyclization and dehydration. The next step is an N-acetylation of the guanidine group catalyzed by the arginine N-acetyltransferase avaD. The roles of the additional enzymes identified within the ava cluster still have to be determined. The sequence is that of Ava biosynthesis cluster protein M from Aspergillus versicolor.